Here is a 160-residue protein sequence, read N- to C-terminus: Transcription antitermination protein NusB (160 aa).

It belongs to the NusB family.

Involved in transcription antitermination. Required for transcription of ribosomal RNA (rRNA) genes. Binds specifically to the boxA antiterminator sequence of the ribosomal RNA (rrn) operons. The chain is Transcription antitermination protein NusB from Rhizobium leguminosarum bv. trifolii (strain WSM2304).